A 517-amino-acid chain; its full sequence is GMP synthase [glutamine-hydrolyzing] (517 aa).

The Glutamine amidotransferase type-1 domain occupies 9–202 (KIIVLDYGSQ…AFNVCKAKGD (194 aa)). Cysteine 86 acts as the Nucleophile in catalysis. Active-site residues include histidine 176 and glutamate 178. The region spanning 203-392 (WSMDSFIDME…LGMPDEIVWR (190 aa)) is the GMPS ATP-PPase domain. 230 to 236 (SGGVDSS) contacts ATP.

As to quaternary structure, homodimer.

The enzyme catalyses XMP + L-glutamine + ATP + H2O = GMP + L-glutamate + AMP + diphosphate + 2 H(+). Its pathway is purine metabolism; GMP biosynthesis; GMP from XMP (L-Gln route): step 1/1. Its function is as follows. Catalyzes the synthesis of GMP from XMP. In Streptococcus mutans serotype c (strain ATCC 700610 / UA159), this protein is GMP synthase [glutamine-hydrolyzing].